The primary structure comprises 319 residues: Thioredoxin reductase (319 aa).

36–43 (TGINKGGQ) serves as a coordination point for FAD. Residues Cys136 and Cys139 are joined by a disulfide bond. 288–297 (DVIDHVYRQA) is a binding site for FAD.

Belongs to the class-II pyridine nucleotide-disulfide oxidoreductase family. Homodimer. It depends on FAD as a cofactor.

The protein resides in the cytoplasm. The enzyme catalyses [thioredoxin]-dithiol + NADP(+) = [thioredoxin]-disulfide + NADPH + H(+). This is Thioredoxin reductase (trxB) from Buchnera aphidicola subsp. Schizaphis graminum (strain Sg).